Here is a 154-residue protein sequence, read N- to C-terminus: Nascent polypeptide-associated complex subunit beta (154 aa).

Positions 34 to 99 (EQDDTKLIEA…PQEKDVTQLI (66 aa)) constitute an NAC-A/B domain. The tract at residues 125–154 (KNPELNAGGAEGAEEDIPDLIEGQKFDDVE) is disordered.

The protein belongs to the NAC-beta family. In terms of assembly, part of the nascent polypeptide-associated complex (NAC), consisting of EGD2 and EGD1. NAC associates with ribosomes via EGD1.

The protein resides in the cytoplasm. Its subcellular location is the nucleus. In terms of biological role, component of the nascent polypeptide-associated complex (NAC), a dynamic component of the ribosomal exit tunnel, protecting the emerging polypeptides from interaction with other cytoplasmic proteins to ensure appropriate nascent protein targeting. The NAC complex also promotes mitochondrial protein import by enhancing productive ribosome interactions with the outer mitochondrial membrane and blocks the inappropriate interaction of ribosomes translating non-secretory nascent polypeptides with translocation sites in the membrane of the endoplasmic reticulum. EGD1 may act as a transcription factor that exert a negative effect on the expression of several genes that are transcribed by RNA polymerase II. This is Nascent polypeptide-associated complex subunit beta (EGD1) from Debaryomyces hansenii (strain ATCC 36239 / CBS 767 / BCRC 21394 / JCM 1990 / NBRC 0083 / IGC 2968) (Yeast).